A 116-amino-acid polypeptide reads, in one-letter code: uncharacterized protein (116 aa).

This is an uncharacterized protein from Aquifex aeolicus (strain VF5).